The primary structure comprises 185 residues: Transmembrane protein 140 (185 aa).

Over 1 to 11 (MAGPRPRWRDQ) the chain is Cytoplasmic. Residues 12–32 (LLFMSIIVLVIVVICLMFYAL) traverse the membrane as a helical segment. Residues 33–77 (LWEAGNLTDLPNLRIGFYNFCLWNEDTSTLQCHQFPELEALGVPR) lie on the Extracellular side of the membrane. An N-linked (GlcNAc...) asparagine glycan is attached at Asn38. A helical transmembrane segment spans residues 78 to 98 (VGLGLARLGVYGSLVLTLFAP). At 99–114 (QPLLLAQCNSDERAWR) the chain is on the cytoplasmic side. A helical transmembrane segment spans residues 115–135 (LAVGFLAVSSVLLAGGLGLFL). Over 136 to 150 (SYVWKWVRLSLPGPG) the chain is Extracellular. The helical transmembrane segment at 151 to 171 (FLALGSAQALLILLLIAMAVF) threads the bilayer. Residues 172 to 185 (PLRAERAESKLESC) lie on the Cytoplasmic side of the membrane.

As to expression, expression significantly higher in gliomas than in normal brain tissues.

Its subcellular location is the membrane. In Homo sapiens (Human), this protein is Transmembrane protein 140 (TMEM140).